A 232-amino-acid chain; its full sequence is Chaperone protein LpfB (232 aa).

Positions 1-23 are cleaved as a signal peptide; sequence MNRSRLISCTALVLALIAQNSFA.

The protein belongs to the periplasmic pilus chaperone family.

It localises to the periplasm. Required for the biogenesis of long polar fimbria; binds and interact with LpfA. The chain is Chaperone protein LpfB (lpfB) from Salmonella typhimurium (strain LT2 / SGSC1412 / ATCC 700720).